Here is a 140-residue protein sequence, read N- to C-terminus: Nucleoside diphosphate kinase (140 aa).

Lys-11, Phe-59, Arg-87, Thr-93, Arg-104, and Asn-114 together coordinate ATP. The active-site Pros-phosphohistidine intermediate is His-117.

It belongs to the NDK family. As to quaternary structure, homotetramer. Mg(2+) serves as cofactor.

It is found in the cytoplasm. The catalysed reaction is a 2'-deoxyribonucleoside 5'-diphosphate + ATP = a 2'-deoxyribonucleoside 5'-triphosphate + ADP. It carries out the reaction a ribonucleoside 5'-diphosphate + ATP = a ribonucleoside 5'-triphosphate + ADP. In terms of biological role, major role in the synthesis of nucleoside triphosphates other than ATP. The ATP gamma phosphate is transferred to the NDP beta phosphate via a ping-pong mechanism, using a phosphorylated active-site intermediate. This Methylobacterium nodulans (strain LMG 21967 / CNCM I-2342 / ORS 2060) protein is Nucleoside diphosphate kinase.